We begin with the raw amino-acid sequence, 188 residues long: Crossover junction endodeoxyribonuclease RuvC (188 aa).

Catalysis depends on residues D7, E68, and D141. Mg(2+) is bound by residues D7, E68, and D141.

This sequence belongs to the RuvC family. In terms of assembly, homodimer which binds Holliday junction (HJ) DNA. The HJ becomes 2-fold symmetrical on binding to RuvC with unstacked arms; it has a different conformation from HJ DNA in complex with RuvA. In the full resolvosome a probable DNA-RuvA(4)-RuvB(12)-RuvC(2) complex forms which resolves the HJ. Mg(2+) serves as cofactor.

Its subcellular location is the cytoplasm. It carries out the reaction Endonucleolytic cleavage at a junction such as a reciprocal single-stranded crossover between two homologous DNA duplexes (Holliday junction).. The RuvA-RuvB-RuvC complex processes Holliday junction (HJ) DNA during genetic recombination and DNA repair. Endonuclease that resolves HJ intermediates. Cleaves cruciform DNA by making single-stranded nicks across the HJ at symmetrical positions within the homologous arms, yielding a 5'-phosphate and a 3'-hydroxyl group; requires a central core of homology in the junction. The consensus cleavage sequence is 5'-(A/T)TT(C/G)-3'. Cleavage occurs on the 3'-side of the TT dinucleotide at the point of strand exchange. HJ branch migration catalyzed by RuvA-RuvB allows RuvC to scan DNA until it finds its consensus sequence, where it cleaves and resolves the cruciform DNA. In Mycobacterium avium (strain 104), this protein is Crossover junction endodeoxyribonuclease RuvC.